The sequence spans 192 residues: Peptide methionine sulfoxide reductase MsrA 1 (192 aa).

Cys-25 is a catalytic residue.

Belongs to the MsrA Met sulfoxide reductase family.

The catalysed reaction is L-methionyl-[protein] + [thioredoxin]-disulfide + H2O = L-methionyl-(S)-S-oxide-[protein] + [thioredoxin]-dithiol. It catalyses the reaction [thioredoxin]-disulfide + L-methionine + H2O = L-methionine (S)-S-oxide + [thioredoxin]-dithiol. In terms of biological role, has an important function as a repair enzyme for proteins that have been inactivated by oxidation. Catalyzes the reversible oxidation-reduction of methionine sulfoxide in proteins to methionine. The polypeptide is Peptide methionine sulfoxide reductase MsrA 1 (Rhodopirellula baltica (strain DSM 10527 / NCIMB 13988 / SH1)).